We begin with the raw amino-acid sequence, 85 residues long: Colicin-E6 immunity protein (85 aa).

This sequence belongs to the cloacin immunity protein family.

Functionally, this protein inhibits the 16S RNA hydrolyzing activity of colicin E6 by binding with high affinity to the C-terminal catalytic domain of E6. This protein is able to protect a cell, which harbors the plasmid ColE6 against colicin E6. This chain is Colicin-E6 immunity protein (imm), found in Escherichia coli.